A 1664-amino-acid chain; its full sequence is Cortactin-binding protein 2 (1664 aa).

4 disordered regions span residues 1-23, 268-440, 455-479, and 495-618; these read MATD…AGAA, QLKR…ALHP, GNAN…SPTS, and QALS…KPSI. The stretch at 119-276 forms a coiled coil; the sequence is RKMQERMSTQ…EQLKRGSDSK (158 aa). Low complexity-rich tracts occupy residues 368 to 379 and 395 to 407; these read SSAPTIPAASAS and TSST…GTTP. At arginine 499 the chain carries Asymmetric dimethylarginine. ANK repeat units lie at residues 710–740, 744–773, 777–806, 810–839, 843–872, and 913–943; these read GRPT…DTNY, DGHS…QVNA, NGFT…DVNH, GGQT…DRSI, DGWT…PARG, and EGWT…EPEK. The tract at residues 871–900 is disordered; the sequence is RGNSSNEEEPESGAFARDGGEESSEGTSEP. Residues 1447-1483 are disordered; that stretch reads SKKKGESGAWRKVSTSPRKKSGRFSSPIWNEPDLSPG. Serine 1525 carries the post-translational modification Phosphoserine. The disordered stretch occupies residues 1558-1664; it reads RTFHSSGSNP…KHEQVEKPNT (107 aa). A compositionally biased stretch (polar residues) spans 1587 to 1600; the sequence is PLSSHQATECSTSK. Positions 1625 to 1639 are enriched in low complexity; it reads SQNTKRSSSSSNTRQ. The span at 1646–1664 shows a compositional bias: basic and acidic residues; the sequence is SKEENWNLHKHEQVEKPNT.

As to quaternary structure, interacts with CTTN/cortactin SH3 domain. Interacts with STRN, STRN4/zinedin and MOB4/phocein; this interactions mediate the association with the STRIPAK core complex and may regulate dendritic spine distribution of the STRIPAK complex in hippocampal neurons. Activation of glutamate receptors weakens the interaction with STRN and STRN4.

The protein localises to the cytoplasm. Its subcellular location is the cell cortex. It localises to the cell projection. The protein resides in the dendritic spine. Functionally, regulates the dendritic spine distribution of CTTN/cortactin in hippocampal neurons, and thus controls dendritic spinogenesis and dendritic spine maintenance. Associates with the striatin-interacting phosphatase and kinase (STRIPAK) core complex to regulate dendritic spine distribution of the STRIPAK complex in hippocampal neurons. The chain is Cortactin-binding protein 2 (CTTNBP2) from Oryctolagus cuniculus (Rabbit).